The chain runs to 227 residues: 2-C-methyl-D-erythritol 4-phosphate cytidylyltransferase (227 aa).

The protein belongs to the IspD/TarI cytidylyltransferase family. IspD subfamily.

The enzyme catalyses 2-C-methyl-D-erythritol 4-phosphate + CTP + H(+) = 4-CDP-2-C-methyl-D-erythritol + diphosphate. The protein operates within isoprenoid biosynthesis; isopentenyl diphosphate biosynthesis via DXP pathway; isopentenyl diphosphate from 1-deoxy-D-xylulose 5-phosphate: step 2/6. Its function is as follows. Catalyzes the formation of 4-diphosphocytidyl-2-C-methyl-D-erythritol from CTP and 2-C-methyl-D-erythritol 4-phosphate (MEP). In Tolumonas auensis (strain DSM 9187 / NBRC 110442 / TA 4), this protein is 2-C-methyl-D-erythritol 4-phosphate cytidylyltransferase.